The sequence spans 320 residues: tRNA pseudouridine synthase B (320 aa).

Aspartate 49 (nucleophile) is an active-site residue.

It belongs to the pseudouridine synthase TruB family. Type 1 subfamily.

The enzyme catalyses uridine(55) in tRNA = pseudouridine(55) in tRNA. Its function is as follows. Responsible for synthesis of pseudouridine from uracil-55 in the psi GC loop of transfer RNAs. The polypeptide is tRNA pseudouridine synthase B (Bartonella bacilliformis (strain ATCC 35685 / KC583 / Herrer 020/F12,63)).